Reading from the N-terminus, the 362-residue chain is Phospho-N-acetylmuramoyl-pentapeptide-transferase (362 aa).

10 consecutive transmembrane segments (helical) span residues Y21–G41, T75–L95, V100–L120, L136–G156, L170–S190, G201–V221, I225–C245, A247–M267, I290–V310, and T339–L359.

The protein belongs to the glycosyltransferase 4 family. MraY subfamily. Requires Mg(2+) as cofactor.

It localises to the cell inner membrane. It catalyses the reaction UDP-N-acetyl-alpha-D-muramoyl-L-alanyl-gamma-D-glutamyl-meso-2,6-diaminopimeloyl-D-alanyl-D-alanine + di-trans,octa-cis-undecaprenyl phosphate = di-trans,octa-cis-undecaprenyl diphospho-N-acetyl-alpha-D-muramoyl-L-alanyl-D-glutamyl-meso-2,6-diaminopimeloyl-D-alanyl-D-alanine + UMP. It functions in the pathway cell wall biogenesis; peptidoglycan biosynthesis. In terms of biological role, catalyzes the initial step of the lipid cycle reactions in the biosynthesis of the cell wall peptidoglycan: transfers peptidoglycan precursor phospho-MurNAc-pentapeptide from UDP-MurNAc-pentapeptide onto the lipid carrier undecaprenyl phosphate, yielding undecaprenyl-pyrophosphoryl-MurNAc-pentapeptide, known as lipid I. This chain is Phospho-N-acetylmuramoyl-pentapeptide-transferase, found in Acidiphilium cryptum (strain JF-5).